The following is a 182-amino-acid chain: ATP synthase subunit delta (182 aa).

This sequence belongs to the ATPase delta chain family. As to quaternary structure, F-type ATPases have 2 components, F(1) - the catalytic core - and F(0) - the membrane proton channel. F(1) has five subunits: alpha(3), beta(3), gamma(1), delta(1), epsilon(1). CF(0) has four main subunits: a(1), b(1), b'(1) and c(10-14). The alpha and beta chains form an alternating ring which encloses part of the gamma chain. F(1) is attached to F(0) by a central stalk formed by the gamma and epsilon chains, while a peripheral stalk is formed by the delta, b and b' chains.

Its subcellular location is the cellular thylakoid membrane. F(1)F(0) ATP synthase produces ATP from ADP in the presence of a proton or sodium gradient. F-type ATPases consist of two structural domains, F(1) containing the extramembraneous catalytic core and F(0) containing the membrane proton channel, linked together by a central stalk and a peripheral stalk. During catalysis, ATP synthesis in the catalytic domain of F(1) is coupled via a rotary mechanism of the central stalk subunits to proton translocation. In terms of biological role, this protein is part of the stalk that links CF(0) to CF(1). It either transmits conformational changes from CF(0) to CF(1) or is implicated in proton conduction. The protein is ATP synthase subunit delta of Microcystis aeruginosa (strain NIES-843 / IAM M-2473).